Consider the following 85-residue polypeptide: UPF0213 protein NP_0776A (85 aa).

The 76-residue stretch at 3 to 78 (ADHYVYVLSC…KSLSRAKKER (76 aa)) folds into the GIY-YIG domain. Positions 58 to 70 (KSAAMQREHEIKS) are enriched in basic and acidic residues. The disordered stretch occupies residues 58–85 (KSAAMQREHEIKSLSRAKKERLVADETG).

This sequence belongs to the UPF0213 family.

The sequence is that of UPF0213 protein NP_0776A from Natronomonas pharaonis (strain ATCC 35678 / DSM 2160 / CIP 103997 / JCM 8858 / NBRC 14720 / NCIMB 2260 / Gabara) (Halobacterium pharaonis).